A 338-amino-acid polypeptide reads, in one-letter code: Solute carrier family 35 member G4 (338 aa).

The tract at residues 1 to 29 (MAGSHPYFNLPDSTHPSPPSTPPSLHWHQ) is disordered. 7 helical membrane passes run 37–57 (TNGLLVALLGGGLPAGFVGPL), 160–180 (CGLLGSILGLIIIVGPGLWTL), 190–210 (GLGYVQAFLGGLALSLGLLVY), 221–241 (TVAFLSGLVGLLGSVPGLFVL), 250–270 (LLSWSCVGAVGILTLVSFTCV), 281–301 (LVCAVLHSEVVMALILQYFML), and 305–325 (VAPSDIMGAGVVLGSIAIITA). The EamA 1 domain occupies 49 to 174 (LPAGFVGPLS…SILGLIIIVG (126 aa)). The EamA 2 domain occupies 272–325 (YAVTKAHPALVCAVLHSEVVMALILQYFMLHETVAPSDIMGAGVVLGSIAIITA).

Belongs to the SLC35G solute transporter family.

It localises to the membrane. The protein is Solute carrier family 35 member G4 (SLC35G4) of Homo sapiens (Human).